Reading from the N-terminus, the 165-residue chain is Alanine- and arginine-rich domain-containing protein (165 aa).

Residues glutamine 136–alanine 165 form a disordered region.

The sequence is that of Alanine- and arginine-rich domain-containing protein (Aard) from Rattus norvegicus (Rat).